Here is a 37-residue protein sequence, read N- to C-terminus: Large ribosomal subunit protein bL36 (37 aa).

This sequence belongs to the bacterial ribosomal protein bL36 family.

The polypeptide is Large ribosomal subunit protein bL36 (Mycobacteroides abscessus (strain ATCC 19977 / DSM 44196 / CCUG 20993 / CIP 104536 / JCM 13569 / NCTC 13031 / TMC 1543 / L948) (Mycobacterium abscessus)).